The sequence spans 512 residues: GMP synthase [glutamine-hydrolyzing] (512 aa).

The 194-residue stretch at 3-196 (NILILDFGSQ…VKHICQTSET (194 aa)) folds into the Glutamine amidotransferase type-1 domain. Catalysis depends on C80, which acts as the Nucleophile. Residues H169 and E171 contribute to the active site. The region spanning 197–387 (WKIETIEKQL…LGLPDVLISR (191 aa)) is the GMPS ATP-PPase domain. Position 225–231 (225–231 (SGGVDSS)) interacts with ATP.

As to quaternary structure, homodimer.

It carries out the reaction XMP + L-glutamine + ATP + H2O = GMP + L-glutamate + AMP + diphosphate + 2 H(+). It functions in the pathway purine metabolism; GMP biosynthesis; GMP from XMP (L-Gln route): step 1/1. In terms of biological role, catalyzes the synthesis of GMP from XMP. In Chlamydia muridarum (strain MoPn / Nigg), this protein is GMP synthase [glutamine-hydrolyzing] (guaA).